Reading from the N-terminus, the 355-residue chain is Peptide chain release factor 1 (355 aa).

Gln229 carries the N5-methylglutamine modification. A disordered region spans residues 280–299; sequence LDRERSAARKGQVGSGDRSE.

It belongs to the prokaryotic/mitochondrial release factor family. In terms of processing, methylated by PrmC. Methylation increases the termination efficiency of RF1.

The protein resides in the cytoplasm. Its function is as follows. Peptide chain release factor 1 directs the termination of translation in response to the peptide chain termination codons UAG and UAA. The sequence is that of Peptide chain release factor 1 from Parvibaculum lavamentivorans (strain DS-1 / DSM 13023 / NCIMB 13966).